The primary structure comprises 129 residues: Venom CUB domain-containing protein 1 (129 aa).

The N-terminal stretch at 1–18 is a signal peptide; sequence MKLLGVLITIYCIASTLA. The 103-residue stretch at 19 to 121 folds into the CUB domain; the sequence is IDVNVPSNGM…KASCKAYSIT (103 aa). Cys66 and Cys83 are disulfide-bonded.

The protein belongs to the venom CUB family. Post-translationally, contains 2 disulfide bonds. Expressed by the venom gland.

The protein resides in the secreted. The polypeptide is Venom CUB domain-containing protein 1 (Platymeris rhadamanthus (Red spot assassin bug)).